A 1196-amino-acid chain; its full sequence is Jouberin (1196 aa).

Residues Lys13 to Ser45 adopt a coiled-coil conformation. Ser45 carries the phosphoserine modification. Disordered regions lie at residues Met56 to Glu186, Gln215 to Pro242, and Ile254 to Thr327. The segment covering Asp80–Lys91 has biased composition (polar residues). A compositionally biased stretch (basic residues) spans Lys92–Leu101. The span at Arg102–Gly113 shows a compositional bias: polar residues. 3 stretches are compositionally biased toward basic and acidic residues: residues Leu141–His154, Asp166–Glu179, and Leu224–Glu233. Positions Leu141 to Leu434 are interaction with HAP1. The segment covering Lys300 to Lys309 has biased composition (basic residues). 7 WD repeats span residues Ala607–Glu649, Gly652–Phe691, Pro695–Ile735, Val742–Glu781, Glu797–Phe837, Ala841–Met880, and Pro885–Glu926. The residue at position 1002 (Ser1002) is a Phosphoserine. Residues Asp1051 to Leu1111 form the SH3 domain. The interval Leu1115 to Glu1196 is disordered. Composition is skewed to basic and acidic residues over residues Pro1117 to Lys1136 and Thr1161 to Met1182. Ser1123 is subject to Phosphoserine.

In terms of assembly, self-associates. Part of the tectonic-like complex (also named B9 complex). Interacts with MKS1. Interacts with NPHP1; probably as heterodimers and/or AHI1(2):NPHP1(2) heterotetramers. Interacts (via SH3 domain) with the dynamin GTPase DNM2. Interacts with HAP1; probably as AHI1(2):HAP1(2) heterotetramers. Interacts with RAB8A. Interacts with CEND1. Interacts with CTNNB1/beta-catenin. Interacts with SPATA7. As to expression, highly expressed in the most primitive normal hematopoietic cells. Expressed in brain, particularly in neurons that give rise to the crossing axons of the corticospinal tract and superior cerebellar peduncles. Expressed in kidney (renal collecting duct cells) (at protein level).

The protein localises to the cytoplasm. The protein resides in the cytoskeleton. It is found in the cilium basal body. It localises to the cell junction. Its subcellular location is the adherens junction. The protein localises to the microtubule organizing center. The protein resides in the centrosome. It is found in the centriole. Functionally, involved in vesicle trafficking and required for ciliogenesis, formation of primary non-motile cilium, and recruitment of RAB8A to the basal body of primary cilium. Component of the tectonic-like complex, a complex localized at the transition zone of primary cilia and acting as a barrier that prevents diffusion of transmembrane proteins between the cilia and plasma membranes. Involved in neuronal differentiation. As a positive modulator of classical Wnt signaling, may play a crucial role in ciliary signaling during cerebellum embryonic development. The polypeptide is Jouberin (AHI1) (Homo sapiens (Human)).